Reading from the N-terminus, the 176-residue chain is Nucleoside triphosphate/diphosphate phosphatase (176 aa).

R23 functions as the Proton donor in the catalytic mechanism. 6 residues coordinate Mg(2+): N87, D103, D105, D107, D120, and E123.

It belongs to the Ntdp family. It depends on Mg(2+) as a cofactor.

The enzyme catalyses a ribonucleoside 5'-triphosphate + H2O = a ribonucleoside 5'-diphosphate + phosphate + H(+). It catalyses the reaction a ribonucleoside 5'-diphosphate + H2O = a ribonucleoside 5'-phosphate + phosphate + H(+). Has nucleoside phosphatase activity towards nucleoside triphosphates and nucleoside diphosphates. This chain is Nucleoside triphosphate/diphosphate phosphatase, found in Bacillus cereus (strain B4264).